We begin with the raw amino-acid sequence, 472 residues long: Carboxypeptidase Q (472 aa).

The signal sequence occupies residues 1–20 (MKFLIFAFFGGVHLLSLCSG). Residues 21-44 (KAIYKNGISKRTFEEIKEEIASYG) constitute a propeptide that is removed on maturation. Asn-61 and Asn-179 each carry an N-linked (GlcNAc...) asparagine glycan. His-290 and Asp-302 together coordinate Zn(2+). Glu-336 acts as the Nucleophile in catalysis. Glu-337 lines the Zn(2+) pocket. N-linked (GlcNAc...) asparagine glycans are attached at residues Asn-353 and Asn-356. A Zn(2+)-binding site is contributed by Asp-364. Asn-396 carries an N-linked (GlcNAc...) asparagine glycan. Residue His-434 participates in Zn(2+) binding.

It belongs to the peptidase M28 family. As to quaternary structure, homodimer. The monomeric form is inactive while the homodimer is active. N-glycosylated. The secreted form is modified by hybrid or complex type oligosaccharide chains.

It is found in the endoplasmic reticulum. Its subcellular location is the golgi apparatus. The protein resides in the lysosome. The protein localises to the secreted. Its function is as follows. Carboxypeptidase that may play an important role in the hydrolysis of circulating peptides. Catalyzes the hydrolysis of dipeptides with unsubstituted terminals into amino acids. May play a role in the liberation of thyroxine hormone from its thyroglobulin (Tg) precursor. In Pongo abelii (Sumatran orangutan), this protein is Carboxypeptidase Q (CPQ).